The sequence spans 757 residues: LPS-assembly protein LptD (757 aa).

A signal peptide spans 1 to 20 (MLQRFITSLMLLPFPGSALA).

Belongs to the LptD family. Component of the lipopolysaccharide transport and assembly complex. Interacts with LptE and LptA.

It is found in the cell outer membrane. Together with LptE, is involved in the assembly of lipopolysaccharide (LPS) at the surface of the outer membrane. In Idiomarina loihiensis (strain ATCC BAA-735 / DSM 15497 / L2-TR), this protein is LPS-assembly protein LptD.